The primary structure comprises 107 residues: Quaternary ammonium compound-resistance protein QacH (107 aa).

4 consecutive transmembrane segments (helical) span residues 1-21 (MPYL…AFLK), 26-46 (FSKL…FYFL), 57-77 (ITYA…SVLI), and 84-104 (LISI…NTFG).

It belongs to the drug/metabolite transporter (DMT) superfamily. Small multidrug resistance (SMR) (TC 2.A.7.1) family.

It localises to the cell membrane. Functionally, multidrug exporter. Is implicated for the resistance to bacteriocidal quaternary ammonium compounds. This is Quaternary ammonium compound-resistance protein QacH (qacH) from Staphylococcus saprophyticus.